The chain runs to 290 residues: Picrinine-N-methytransferase TMT4 (290 aa).

The tract at residues 71-80 (MLDVGCGIGG) is SAM motif I. Positions 133 to 139 (DGTFDVV) match the Vacuolar targeting signal motif. An SAM motif II region spans residues 134 to 142 (GTFDVVFTI). Residues 161-170 (VAAPGAAIVI) are SAM motif III.

Belongs to the class I-like SAM-binding methyltransferase superfamily. gTMT family. In terms of assembly, homodimer.

It is found in the vacuole membrane. The catalysed reaction is picrinine + S-adenosyl-L-methionine = ervincine + S-adenosyl-L-homocysteine + H(+). It functions in the pathway alkaloid biosynthesis; vindoline biosynthesis. Functionally, S-adenosyl-L-methionine-dependent N-methyltransferase involved in the biosynthesis of biologically active monoterpenoid indole alkaloids (MIAs) natural products including vindoline. Catalyzes the conversion of picrinine to N-methylpicrinine (ervincine). This Catharanthus roseus (Madagascar periwinkle) protein is Picrinine-N-methytransferase TMT4.